A 600-amino-acid polypeptide reads, in one-letter code: Aspartate--tRNA(Asp/Asn) ligase (600 aa).

E187 serves as a coordination point for L-aspartate. The segment at 211 to 214 is aspartate; that stretch reads QIFK. Residues R233 and H463 each coordinate L-aspartate. 233 to 235 contributes to the ATP binding site; the sequence is RDE. E497 serves as a coordination point for ATP. Residue R504 participates in L-aspartate binding. 549 to 552 contacts ATP; the sequence is GIDR.

This sequence belongs to the class-II aminoacyl-tRNA synthetase family. Type 1 subfamily. In terms of assembly, homodimer.

It is found in the cytoplasm. The catalysed reaction is tRNA(Asx) + L-aspartate + ATP = L-aspartyl-tRNA(Asx) + AMP + diphosphate. Functionally, aspartyl-tRNA synthetase with relaxed tRNA specificity since it is able to aspartylate not only its cognate tRNA(Asp) but also tRNA(Asn). Reaction proceeds in two steps: L-aspartate is first activated by ATP to form Asp-AMP and then transferred to the acceptor end of tRNA(Asp/Asn). The polypeptide is Aspartate--tRNA(Asp/Asn) ligase (Wolbachia sp. subsp. Brugia malayi (strain TRS)).